Here is a 540-residue protein sequence, read N- to C-terminus: Chaperonin GroEL (540 aa).

ATP-binding positions include 30-33, lysine 51, 87-91, glycine 415, 479-481, and aspartate 495; these read TLAP, DGTTT, and NAA.

Belongs to the chaperonin (HSP60) family. Forms a cylinder of 14 subunits composed of two heptameric rings stacked back-to-back. Interacts with the co-chaperonin GroES.

The protein localises to the cytoplasm. The enzyme catalyses ATP + H2O + a folded polypeptide = ADP + phosphate + an unfolded polypeptide.. In terms of biological role, together with its co-chaperonin GroES, plays an essential role in assisting protein folding. The GroEL-GroES system forms a nano-cage that allows encapsulation of the non-native substrate proteins and provides a physical environment optimized to promote and accelerate protein folding. This is Chaperonin GroEL from Methylovorus sp. (strain SS1 / DSM 11726).